We begin with the raw amino-acid sequence, 131 residues long: D-ribose pyranase (131 aa).

The active-site Proton donor is the histidine 20. Residues aspartate 28, histidine 98, and 120–122 (YAN) contribute to the substrate site.

Belongs to the RbsD / FucU family. RbsD subfamily. Homodecamer.

It is found in the cytoplasm. It catalyses the reaction beta-D-ribopyranose = beta-D-ribofuranose. It participates in carbohydrate metabolism; D-ribose degradation; D-ribose 5-phosphate from beta-D-ribopyranose: step 1/2. Catalyzes the interconversion of beta-pyran and beta-furan forms of D-ribose. The polypeptide is D-ribose pyranase (Clostridium tetani (strain Massachusetts / E88)).